The chain runs to 95 residues: Aspartyl/glutamyl-tRNA(Asn/Gln) amidotransferase subunit C (95 aa).

It belongs to the GatC family. In terms of assembly, heterotrimer of A, B and C subunits.

It carries out the reaction L-glutamyl-tRNA(Gln) + L-glutamine + ATP + H2O = L-glutaminyl-tRNA(Gln) + L-glutamate + ADP + phosphate + H(+). The catalysed reaction is L-aspartyl-tRNA(Asn) + L-glutamine + ATP + H2O = L-asparaginyl-tRNA(Asn) + L-glutamate + ADP + phosphate + 2 H(+). Allows the formation of correctly charged Asn-tRNA(Asn) or Gln-tRNA(Gln) through the transamidation of misacylated Asp-tRNA(Asn) or Glu-tRNA(Gln) in organisms which lack either or both of asparaginyl-tRNA or glutaminyl-tRNA synthetases. The reaction takes place in the presence of glutamine and ATP through an activated phospho-Asp-tRNA(Asn) or phospho-Glu-tRNA(Gln). The polypeptide is Aspartyl/glutamyl-tRNA(Asn/Gln) amidotransferase subunit C (Rhizobium leguminosarum bv. trifolii (strain WSM2304)).